The chain runs to 494 residues: MAKTLTASQAAKEHVLAVSRDFISQPRLIYKTVSGVNGPLVILDDVKFPKFSEIVQLRLADGTLRSGQVLEVSGTKAVVQVFEGTSGIDAKNTLCEFTGDILRTPVSEDMLGRVFNGSGKPIDKGPPILAEDFLDIQGQPINPWSRIYPEEMIQTGISAIDVMNSIARGQKIPIFSAAGLPHNEIAAQICRQAGLVKIPGKSVLDDHEDNFAIVFAAMGVNMETARFFKQDFEENGSMENVCLFLNLANDPTIERIITPRLALTAAEFLAYQCEKHVLVILTDMSSYAEALREVSAAREEVPGRRGFPGYMYTDLATIYERAGRVEGRNGSITQIPILTMPNDDITHPIPDLTGYITEGQIYVDRQLHNRQIYPPVNVLPSLSRLMKSAIGEGMTRKDHSDVSNQLYACYAIGKDVQAMKAVVGEEALTPDDLLYLEFLTKFEKNFISQGNYENRTVFESLDIGWQLLRIFPKEMLKRIPASILAEFYPRDSRH.

Residue arginine 384 participates in ATP binding.

This sequence belongs to the ATPase alpha/beta chains family. As to quaternary structure, V-ATPase is a heteromultimeric enzyme made up of two complexes: the ATP-hydrolytic V1 complex and the proton translocation V0 complex. The V1 complex consists of three catalytic AB heterodimers that form a heterohexamer, three peripheral stalks each consisting of EG heterodimers, one central rotor including subunits D and F, and the regulatory subunits C and H. The proton translocation complex V0 consists of the proton transport subunit a, a ring of proteolipid subunits c9c'', rotary subunit d, subunits e and f, and the accessory subunits VhaAC45 and ATP6AP2.

In terms of biological role, non-catalytic subunit of the V1 complex of vacuolar(H+)-ATPase (V-ATPase), a multisubunit enzyme composed of a peripheral complex (V1) that hydrolyzes ATP and a membrane integral complex (V0) that translocates protons. V-ATPase is responsible for acidifying and maintaining the pH of intracellular compartments and in some cell types, is targeted to the plasma membrane, where it is responsible for acidifying the extracellular environment. Essential for the proper assembly and activity of V-ATPase. The sequence is that of V-type proton ATPase subunit B (VHA55) from Heliothis virescens (Tobacco budworm moth).